We begin with the raw amino-acid sequence, 326 residues long: Olfactory receptor 11H12 (326 aa).

Topologically, residues 1–44 are extracellular; it reads MCPLTLQVTGLMNVSEPNSSFAFVNEFILQGFTCEWTIQIFLFS. N-linked (GlcNAc...) asparagine glycans are attached at residues Asn13 and Asn18. The helical transmembrane segment at 45 to 65 threads the bilayer; the sequence is LFTTTYALTITGNGAIAFVLW. Topologically, residues 66–72 are cytoplasmic; the sequence is CDWRLHT. The helical transmembrane segment at 73–93 threads the bilayer; it reads PMYMFLGNFSFLEIWYVSSTV. At 94 to 112 the chain is on the extracellular side; the sequence is PKMLVNFLSEKKNISFAGC. Residue Asn106 is glycosylated (N-linked (GlcNAc...) asparagine). Residues Cys112 and Cys194 are joined by a disulfide bond. A helical membrane pass occupies residues 113 to 133; that stretch reads FLQFYFFFSLGTSECLLLTVM. Over 134-158 the chain is Cytoplasmic; the sequence is AFDQYLAICRPLLYPNIMTGHLCAK. Residues 159-179 traverse the membrane as a helical segment; the sequence is LVILCWVCGFLWFLIPIVLIS. The Extracellular portion of the chain corresponds to 180 to 216; it reads QMPFCGPNIIDHVVCDPGPRFALDCVSAPRIQLFCYT. Residues 217–237 traverse the membrane as a helical segment; it reads LSSLVIFGNFLFIIGSYTLVL. The Cytoplasmic portion of the chain corresponds to 238-259; sequence KAVLGMPSSTGRHKAFSTCGSH. The helical transmembrane segment at 260–280 threads the bilayer; that stretch reads LAVVSLCYSSLMVMYVSPGLG. The Extracellular portion of the chain corresponds to 281 to 287; the sequence is HSTGMQK. A helical transmembrane segment spans residues 288–308; it reads IETLFYAMVTPLFNPLIYSLQ. Residues 309-326 lie on the Cytoplasmic side of the membrane; the sequence is NKEIKAALRKVLGSSNII.

The protein belongs to the G-protein coupled receptor 1 family.

It is found in the cell membrane. Functionally, odorant receptor. The polypeptide is Olfactory receptor 11H12 (OR11H12) (Homo sapiens (Human)).